Here is a 145-residue protein sequence, read N- to C-terminus: Ventricular natriuretic peptide (145 aa).

Residues 1 to 24 form the signal peptide; that stretch reads MRMGKIAVGYGFLLLLVFQLGVRA. The cysteines at positions 117 and 133 are disulfide-linked.

The protein belongs to the natriuretic peptide family. In terms of tissue distribution, heart atrium and ventricle, and to a very low extent in brain.

The protein localises to the secreted. In terms of biological role, exhibits natriuretic and vasodepressor activity. The sequence is that of Ventricular natriuretic peptide (vnp) from Acipenser transmontanus (White sturgeon).